Here is a 447-residue protein sequence, read N- to C-terminus: MASFPHPGSVTVCEINRDLITAQNLSDERAQETYGKVLGMVFSPVSFDSTPSSLQENEGQENGDKASGESKGLVATLQMKVADSLKQILQPTDVTLLSEIDLQGVSWHQGKHIIAFISGANQVTIRDYEDKDEKEPCILTSDSQRNVKALEWRPNGGKSLSIACRGGICIWAASYPGNMALVRSGGSALRGSLSRGSGTRWILVDFLRCQNDEQISALSWSPCGRYLASASYDSSSFTIWDVSQGAGTPIRRGLGGISMLKWSPTGDYFFAARFDGTFCLWETNTWTSEPWSLSSGSGSVTGAIWDPEGRFILISFSKSSTLGSVHFSSKPPSLDAHLLPVELPEIASLTGCEGIEKIAWDASGERLAVSYKGGDENYKGLIAIYDTRRTPIVSASLVGFIRGPGENPKALSFSFHDKFKQGPLLSVCWSTGFCCTYPLIFRSHVLP.

Residues 49–69 (STPSSLQENEGQENGDKASGE) are disordered. WD repeat units lie at residues 97–138 (LSEI…EPCI), 142–181 (DSQR…NMAL), 210–250 (QNDE…GTPI), and 252–291 (RGLG…SEPW).

In terms of assembly, part of the nuclear pore complex (NPC). The NPC has an eight-fold symmetrical structure comprising a central transport channel and two rings, the cytoplasmic and nuclear rings, to which eight filaments are attached. The cytoplasmic filaments have loose ends, while the nuclear filaments are joined in a distal ring, forming a nuclear basket. NPCs are highly dynamic in configuration and composition, and can be devided in 3 subcomplexes, the NUP62 subcomplex, the NUP107-160 subcomplex and the NUP93 subcomplex, containing approximately 30 different nucleoporin proteins.

The protein resides in the nucleus envelope. It localises to the nucleus. Its subcellular location is the nuclear pore complex. The sequence is that of Aladin from Arabidopsis thaliana (Mouse-ear cress).